The sequence spans 335 residues: tRNA N6-adenosine threonylcarbamoyltransferase (335 aa).

Fe cation is bound by residues His111 and His115. Residues 134 to 138 (LISGG), Asp167, Gly180, and Asn270 contribute to the substrate site. Asp298 provides a ligand contact to Fe cation.

It belongs to the KAE1 / TsaD family. Fe(2+) is required as a cofactor.

It localises to the cytoplasm. It catalyses the reaction L-threonylcarbamoyladenylate + adenosine(37) in tRNA = N(6)-L-threonylcarbamoyladenosine(37) in tRNA + AMP + H(+). Required for the formation of a threonylcarbamoyl group on adenosine at position 37 (t(6)A37) in tRNAs that read codons beginning with adenine. Is involved in the transfer of the threonylcarbamoyl moiety of threonylcarbamoyl-AMP (TC-AMP) to the N6 group of A37, together with TsaE and TsaB. TsaD likely plays a direct catalytic role in this reaction. This Nitrosococcus oceani (strain ATCC 19707 / BCRC 17464 / JCM 30415 / NCIMB 11848 / C-107) protein is tRNA N6-adenosine threonylcarbamoyltransferase.